Here is a 393-residue protein sequence, read N- to C-terminus: Acetylornithine aminotransferase 1 (393 aa).

N(2)-acetyl-L-ornithine is bound at residue R131. A pyridoxal 5'-phosphate-binding site is contributed by 215 to 218 (DEVQ). K244 is modified (N6-(pyridoxal phosphate)lysine). Residue T272 coordinates N(2)-acetyl-L-ornithine. Pyridoxal 5'-phosphate is bound at residue T273.

Belongs to the class-III pyridoxal-phosphate-dependent aminotransferase family. ArgD subfamily. As to quaternary structure, homodimer. Pyridoxal 5'-phosphate is required as a cofactor.

The protein resides in the cytoplasm. The catalysed reaction is N(2)-acetyl-L-ornithine + 2-oxoglutarate = N-acetyl-L-glutamate 5-semialdehyde + L-glutamate. It participates in amino-acid biosynthesis; L-arginine biosynthesis; N(2)-acetyl-L-ornithine from L-glutamate: step 4/4. The polypeptide is Acetylornithine aminotransferase 1 (Bordetella pertussis (strain Tohama I / ATCC BAA-589 / NCTC 13251)).